The following is a 630-amino-acid chain: Protein mono-ADP-ribosyltransferase PARP6 (630 aa).

Position 237 is an ADP-ribosylcysteine (Cys-237). A PARP catalytic domain is found at 394 to 620 (EMTQGSYLEI…QDPKIQKEIM (227 aa)). ADP-ribosyl aspartic acid is present on Asp-600.

Belongs to the ARTD/PARP family. Post-translationally, auto-mono-ADP-ribosylated.

The enzyme catalyses L-aspartyl-[protein] + NAD(+) = 4-O-(ADP-D-ribosyl)-L-aspartyl-[protein] + nicotinamide. It catalyses the reaction L-cysteinyl-[protein] + NAD(+) = S-(ADP-D-ribosyl)-L-cysteinyl-[protein] + nicotinamide + H(+). In terms of biological role, mono-ADP-ribosyltransferase that mediates mono-ADP-ribosylation of target proteins. The protein is Protein mono-ADP-ribosyltransferase PARP6 of Mus musculus (Mouse).